A 382-amino-acid polypeptide reads, in one-letter code: LIM homeobox transcription factor 1-alpha (382 aa).

LIM zinc-binding domains are found at residues 33–92 (SVCE…LFAV) and 92–154 (VKCG…EREL). 2 disordered regions span residues 161–208 (AASD…QQRR) and 252–286 (KLAR…MEGI). The homeobox DNA-binding region spans 195 to 254 (PKRPRTILTTQQRRAFKASFEVSSKPCRKVRETLAAETGLSVRVVQVWFQNQRAKMKKLA). The segment covering 256–269 (RQQQQQQDQQNTQR) has biased composition (low complexity).

Its subcellular location is the nucleus. In terms of biological role, acts as a transcriptional activator by binding to an A/T-rich sequence, the FLAT element, in the insulin gene promoter. Required for development of the roof plate and, in turn, for specification of dorsal cell fates in the CNS and developing vertebrae. The sequence is that of LIM homeobox transcription factor 1-alpha (Lmx1a) from Mus musculus (Mouse).